The following is a 451-amino-acid chain: KNR4/SMI1 homolog 1 (451 aa).

Polar residues predominate over residues 410–422 (ENQIAGGSDNAKN). Residues 410 to 451 (ENQIAGGSDNAKNQVKLGETSDTKQDDTSKIASTVSTSDEDE) form a disordered region. A compositionally biased stretch (basic and acidic residues) spans 428–438 (ETSDTKQDDTS). A compositionally biased stretch (polar residues) spans 439 to 451 (KIASTVSTSDEDE).

It belongs to the KNR4/SMI1 family.

The protein is KNR4/SMI1 homolog 1 of Debaryomyces hansenii (strain ATCC 36239 / CBS 767 / BCRC 21394 / JCM 1990 / NBRC 0083 / IGC 2968) (Yeast).